We begin with the raw amino-acid sequence, 1413 residues long: DNA-directed RNA polymerase subunit beta' (1413 aa).

The Zn(2+) site is built by Cys-70, Cys-72, Cys-85, and Cys-88. Asp-461, Asp-463, and Asp-465 together coordinate Mg(2+). Zn(2+)-binding residues include Cys-820, Cys-894, Cys-901, and Cys-904.

This sequence belongs to the RNA polymerase beta' chain family. The RNAP catalytic core consists of 2 alpha, 1 beta, 1 beta' and 1 omega subunit. When a sigma factor is associated with the core the holoenzyme is formed, which can initiate transcription. It depends on Mg(2+) as a cofactor. The cofactor is Zn(2+).

It catalyses the reaction RNA(n) + a ribonucleoside 5'-triphosphate = RNA(n+1) + diphosphate. In terms of biological role, DNA-dependent RNA polymerase catalyzes the transcription of DNA into RNA using the four ribonucleoside triphosphates as substrates. The sequence is that of DNA-directed RNA polymerase subunit beta' from Cupriavidus metallidurans (strain ATCC 43123 / DSM 2839 / NBRC 102507 / CH34) (Ralstonia metallidurans).